A 504-amino-acid chain; its full sequence is UDP-glycosyltransferase UGT4 (504 aa).

An N-terminal signal peptide occupies residues 1–23; it reads MTLLRDLLLLYINSLLFINPSIG. The Lumenal portion of the chain corresponds to 24–474; it reads ENILVFLPTK…SAVIDLYWFQ (451 aa). Residues asparagine 54, asparagine 66, asparagine 69, and asparagine 422 are each glycosylated (N-linked (GlcNAc...) asparagine). A helical membrane pass occupies residues 475–495; it reads YILLDIILFYSLIVLILLCIL. Residues 496–504 lie on the Cytoplasmic side of the membrane; sequence RIFFRMLTK.

The protein belongs to the UDP-glycosyltransferase family.

The protein resides in the microsome membrane. Catalyzes the transfer of a glycosyl group from a UDP-sugar to an acceptor molecule. The chain is UDP-glycosyltransferase UGT4 from Dactylopius coccus (Cochineal).